We begin with the raw amino-acid sequence, 200 residues long: Pyrrolidone-carboxylate peptidase (200 aa).

Residues Glu78, Cys141, and His165 contribute to the active site.

The protein belongs to the peptidase C15 family. Homotetramer.

Its subcellular location is the cytoplasm. The catalysed reaction is Release of an N-terminal pyroglutamyl group from a polypeptide, the second amino acid generally not being Pro.. In terms of biological role, removes 5-oxoproline from various penultimate amino acid residues except L-proline. The chain is Pyrrolidone-carboxylate peptidase from Lactobacillus helveticus (strain DPC 4571).